We begin with the raw amino-acid sequence, 120 residues long: Large ribosomal subunit protein uL18 (120 aa).

This sequence belongs to the universal ribosomal protein uL18 family. In terms of assembly, part of the 50S ribosomal subunit; part of the 5S rRNA/L5/L18/L25 subcomplex. Contacts the 5S and 23S rRNAs.

Functionally, this is one of the proteins that bind and probably mediate the attachment of the 5S RNA into the large ribosomal subunit, where it forms part of the central protuberance. The polypeptide is Large ribosomal subunit protein uL18 (Paramagnetospirillum magneticum (strain ATCC 700264 / AMB-1) (Magnetospirillum magneticum)).